Consider the following 549-residue polypeptide: Beta-mannosyltransferase 3 (549 aa).

At 1-37 (MFESDLSFYSALLILCCPISIVFFKKFPIKGYTGANK) the chain is on the cytoplasmic side. The helical transmembrane segment at 38–58 (VSLFLQCLIAILNLNILYSFI) threads the bilayer. Residues 59 to 549 (NSLTITLGHD…DTMGWDKLSR (491 aa)) are Extracellular-facing.

It belongs to the BMT family.

It is found in the membrane. Functionally, beta-mannosyltransferase involved in cell wall biosynthesis. Required for addition of the second beta-mannose residue to acid-stable fraction of cell wall phosphopeptidomannan, and in elongation of beta-mannose chains on the phosphopeptidomannan acid-labile fraction. The sequence is that of Beta-mannosyltransferase 3 (BMT3) from Candida albicans (strain SC5314 / ATCC MYA-2876) (Yeast).